The sequence spans 861 residues: MKQNYCPKTIEPYVQSIWKKKNTFKVTENSNKEKFYCLAMIPYPSGKLHMGHVRNYTISDVIARYQRMLGKNVLHPMGWDAFGLPAENAAIKNNTHPAQWTYENIKYMKQQLISLGLSYDWDREITTCKPEYYQWEQWFFIELYKKNLVYKKKSWVNWCEYDKTVLANEQVINELCWRCNNKVIKKKIFQWFIKITKYAEELLNDLDNLPEWPEKVKTMQHNWIGRNHGIKIKLKLANQHTILNDVFISKPSTLMGATFITLSPSHELSFKIARKKHKIQEFIENCSSNTNTYNDINNTNIGINTNEFALHPITKKKLPIWITNYVLSDYDTNSILCVPAHNQHDLNFAIKYNLKIKAVILNLDGTEPKIKNTAMTSMGKLFNSNQYNNLNYQEGSYRIIQDLENNHIGKKITYYRLRDWSISRQRYWGAPIPMAVLENKKNVPIPKQYLPIILPETIPFKNIKPLSNNILLKKIYIDEKIAICESDTFDTFLESSWYYARFTCNNFHKGMISQKLANYWLPVDQYIGGIEHAVMHLIYFRFVHKLLRDLGLVYSNEPVKKLLCQGMVLSDAFYYFDHNKQKQWISAKSITIKYDSNHKIQSHFYSNNKKIFHAGMIKMSKSKFNGIEPEDIIKKYGTDTIRLFIMFAAPVESALEWKESGVKGIHKFLKKLWVLSYNHIKLYNHKIKLRINLFTEQQQHIYSELHKTIKIVSQYITDTQSFNVAISKIMKFSNTLMSISLKNEQNQALMQESLLAVIQMLYPFIPHFSFAIWEFLSPKKENIDFISWPKYNFKAILSKLKYTIIIQINGKKRHKILALKNSSQEKILEIILNENKIKKYLNNKPIQKIIYIPNKILNLVI.

A 'HIGH' region motif is present at residues 42 to 52 (PYPSGKLHMGH). Residues 618 to 622 (KMSKS) carry the 'KMSKS' region motif. Lys-621 contacts ATP.

This sequence belongs to the class-I aminoacyl-tRNA synthetase family.

The protein localises to the cytoplasm. The catalysed reaction is tRNA(Leu) + L-leucine + ATP = L-leucyl-tRNA(Leu) + AMP + diphosphate. The chain is Leucine--tRNA ligase from Buchnera aphidicola subsp. Baizongia pistaciae (strain Bp).